Consider the following 542-residue polypeptide: Importin subunit alpha (542 aa).

Methionine 1 bears the N-acetylmethionine mark. Positions 1 to 11 (MDNGTDSSTSK) are enriched in polar residues. Residues 1–65 (MDNGTDSSTS…RNFIPPTDGA (65 aa)) form the IBB domain. The tract at residues 1-77 (MDNGTDSSTS…DEEDESSVSA (77 aa)) is disordered. Residues 27-53 (FSADELRRRRDTQQVELRKAKRDEALA) are compositionally biased toward basic and acidic residues. The ARM 1; truncated repeat unit spans residues 89 to 122 (LPQMTQQLNSDDMQEQLSATVKFRQILSREHRPP). 8 ARM repeats span residues 123 to 162 (IDVV…ASGT), 163 to 204 (SAQT…AGDS), 205 to 251 (TDYR…PQPD), 252 to 288 (WSVV…SDGP), 289 to 330 (QEAI…VTGN), 331 to 372 (DLQT…TAGN), 373 to 417 (TEQI…GLQR), and 418 to 471 (PDII…LNIN). An NLS binding site 1 region spans residues 209-335 (DYVLQCNAME…IVTGNDLQTQ (127 aa)). Residues 419–505 (DIIRYLVSQG…KIYEKAYKII (87 aa)) are NLS binding site 2. An ARM 10; atypical repeat occupies 472–508 (ENADFIEKAGGMEKIFNCQQNENDKIYEKAYKIIETY).

It belongs to the importin alpha family. As to quaternary structure, forms a complex with an importin beta subunit. In the nucleus, interacts with NUP2 which accelerate release of NLSs, NUP2 is subsequently displaced by CSE1:RanGTP which mediates re-export and recycling. Interacts with HEH2, SHE2, and STS1.

It is found in the cytoplasm. The protein localises to the perinuclear region. Functions in nuclear protein import as an adapter protein for importin beta nuclear receptors. Binds specifically and directly to substrates containing either a simple or bipartite NLS motif. Promotes docking of import substrates to the nuclear envelope. Together with importin beta KAP95, mediates nuclear import of transcription factor GCN4. Together with tethering factor STS1, targets the proteasome to the nucleus. The sequence is that of Importin subunit alpha (SRP1) from Saccharomyces cerevisiae (strain ATCC 204508 / S288c) (Baker's yeast).